We begin with the raw amino-acid sequence, 439 residues long: uncharacterized protein (439 aa).

3 disordered regions span residues 1 to 36 (MRPGNAATAHDTGTQPRPGPTENWRSPAAVTRSKQA), 126 to 157 (SRTGAAVSDEYRPTGAALEQPGQEPGGTGVPI), and 411 to 439 (FRSDVPQPPPSPACRTTRAGSGAVAAVPR).

This is an uncharacterized protein from Streptomyces fradiae (Streptomyces roseoflavus).